We begin with the raw amino-acid sequence, 261 residues long: Cytochrome c oxidase subunit 3 (261 aa).

Residues 1-15 (MTNQLHPFHMTNPSP) are Mitochondrial matrix-facing. Residues 16–34 (WPLTGATAALLMTSGLIMW) form a helical membrane-spanning segment. Residues 35-40 (FHYNSS) lie on the Mitochondrial intermembrane side of the membrane. A helical transmembrane segment spans residues 41–66 (QLIMLGLLIMLLTLTQWWRDIVREST). The Mitochondrial matrix portion of the chain corresponds to 67–72 (FQGHHT). Residues 73–105 (PSVQNNLRYGMILFITSEILFFTGFFWAFYHSS) form a helical membrane-spanning segment. Topologically, residues 106-128 (LSPTAELGNIWPPTGITPLNPFE) are mitochondrial intermembrane. A helical membrane pass occupies residues 129-152 (VPLLNTAVLLASGVTITWAHHSLM). The Mitochondrial matrix segment spans residues 153–155 (EGN). Residues 156 to 183 (RPQTLQALTLTIILGTYFTILQAMEYFE) traverse the membrane as a helical segment. At 184-190 (ASFTIAD) the chain is on the mitochondrial intermembrane side. Residues 191–223 (SIYGSTFFVATGFHGLHVIIGSTFLIVCLMRQL) traverse the membrane as a helical segment. The Mitochondrial matrix portion of the chain corresponds to 224 to 232 (KYHFTSHHH). The helical transmembrane segment at 233–256 (FGFEAAAWYWHFVDVIWLFLYLSI) threads the bilayer. The Mitochondrial intermembrane segment spans residues 257–261 (YWWGS).

Belongs to the cytochrome c oxidase subunit 3 family. Component of the cytochrome c oxidase (complex IV, CIV), a multisubunit enzyme composed of 14 subunits. The complex is composed of a catalytic core of 3 subunits MT-CO1, MT-CO2 and MT-CO3, encoded in the mitochondrial DNA, and 11 supernumerary subunits COX4I, COX5A, COX5B, COX6A, COX6B, COX6C, COX7A, COX7B, COX7C, COX8 and NDUFA4, which are encoded in the nuclear genome. The complex exists as a monomer or a dimer and forms supercomplexes (SCs) in the inner mitochondrial membrane with NADH-ubiquinone oxidoreductase (complex I, CI) and ubiquinol-cytochrome c oxidoreductase (cytochrome b-c1 complex, complex III, CIII), resulting in different assemblies (supercomplex SCI(1)III(2)IV(1) and megacomplex MCI(2)III(2)IV(2)).

It localises to the mitochondrion inner membrane. It catalyses the reaction 4 Fe(II)-[cytochrome c] + O2 + 8 H(+)(in) = 4 Fe(III)-[cytochrome c] + 2 H2O + 4 H(+)(out). Functionally, component of the cytochrome c oxidase, the last enzyme in the mitochondrial electron transport chain which drives oxidative phosphorylation. The respiratory chain contains 3 multisubunit complexes succinate dehydrogenase (complex II, CII), ubiquinol-cytochrome c oxidoreductase (cytochrome b-c1 complex, complex III, CIII) and cytochrome c oxidase (complex IV, CIV), that cooperate to transfer electrons derived from NADH and succinate to molecular oxygen, creating an electrochemical gradient over the inner membrane that drives transmembrane transport and the ATP synthase. Cytochrome c oxidase is the component of the respiratory chain that catalyzes the reduction of oxygen to water. Electrons originating from reduced cytochrome c in the intermembrane space (IMS) are transferred via the dinuclear copper A center (CU(A)) of subunit 2 and heme A of subunit 1 to the active site in subunit 1, a binuclear center (BNC) formed by heme A3 and copper B (CU(B)). The BNC reduces molecular oxygen to 2 water molecules using 4 electrons from cytochrome c in the IMS and 4 protons from the mitochondrial matrix. This Pelomedusa subrufa (African side-necked turtle) protein is Cytochrome c oxidase subunit 3 (MT-CO3).